We begin with the raw amino-acid sequence, 183 residues long: NADH-quinone oxidoreductase subunit I (183 aa).

2 4Fe-4S ferredoxin-type domains span residues 44–74 (LNRW…VEAG) and 90–119 (RVYQ…MTNE). [4Fe-4S] cluster-binding residues include cysteine 54, cysteine 57, cysteine 60, cysteine 64, cysteine 99, cysteine 102, cysteine 105, and cysteine 109. The tract at residues 143-183 (QGMEAPPHPMRLGETEKDYYRLGRDDNAAARADEQNSEAVQ) is disordered. The span at 153–176 (RLGETEKDYYRLGRDDNAAARADE) shows a compositional bias: basic and acidic residues.

This sequence belongs to the complex I 23 kDa subunit family. In terms of assembly, NDH-1 is composed of 14 different subunits. Subunits NuoA, H, J, K, L, M, N constitute the membrane sector of the complex. [4Fe-4S] cluster is required as a cofactor.

It localises to the cell membrane. The catalysed reaction is a quinone + NADH + 5 H(+)(in) = a quinol + NAD(+) + 4 H(+)(out). In terms of biological role, NDH-1 shuttles electrons from NADH, via FMN and iron-sulfur (Fe-S) centers, to quinones in the respiratory chain. The immediate electron acceptor for the enzyme in this species is believed to be ubiquinone. Couples the redox reaction to proton translocation (for every two electrons transferred, four hydrogen ions are translocated across the cytoplasmic membrane), and thus conserves the redox energy in a proton gradient. The polypeptide is NADH-quinone oxidoreductase subunit I (Thermobifida fusca (strain YX)).